Reading from the N-terminus, the 576-residue chain is (E,E)-alpha-farnesene synthase (576 aa).

The (2E,6E)-farnesyl diphosphate site is built by Arg289, Asp326, Asp330, Arg468, and Asn471. Mg(2+)-binding residues include Asp326 and Asp330. The DDXXD motif signature appears at 326–330 (DDVYD). Mg(2+) contacts are provided by Asn471, Thr475, and Glu479. K(+) is bound by residues Asp484 and Ser487.

It belongs to the terpene synthase family. Tpsb subfamily. Monomer. Mg(2+) is required as a cofactor. Requires Mn(2+) as cofactor. It depends on K(+) as a cofactor.

The protein resides in the cytoplasm. The enzyme catalyses (2E,6E)-farnesyl diphosphate = (3E,6E)-alpha-farnesene + diphosphate. Its function is as follows. Sesquiterpene synthase catalyzing the production of (E,E)-alpha-farnesene, the predominant terpene produced during storage of fruits. Produces all six isomers (E,E)-alpha-farnesene, (Z,E)-alpha-farnesene, (E,Z)-alpha-farnesene, (Z,Z)-alpha-farnesene, (E)-beta-farnesene and (Z)-beta-farnesene from a mix of isomeric forms of the farnesyl diphosphate precursor. Able to convert geranyl diphosphate to the monoterpenes (E)-beta-ocimene, linalool and beta-myrcene. Also has a prenyltransferase activity producing alpha-farnesene directly from geranyl diphosphate and isoprenyl diphosphate. The protein is (E,E)-alpha-farnesene synthase (AFS1) of Malus domestica (Apple).